The chain runs to 165 residues: Crossover junction endodeoxyribonuclease RuvC (165 aa).

Active-site residues include aspartate 8, glutamate 69, and histidine 141. Residues aspartate 8, glutamate 69, and histidine 141 each contribute to the Mg(2+) site.

It belongs to the RuvC family. In terms of assembly, homodimer which binds Holliday junction (HJ) DNA. The HJ becomes 2-fold symmetrical on binding to RuvC with unstacked arms; it has a different conformation from HJ DNA in complex with RuvA. In the full resolvosome a probable DNA-RuvA(4)-RuvB(12)-RuvC(2) complex forms which resolves the HJ. It depends on Mg(2+) as a cofactor.

Its subcellular location is the cytoplasm. The catalysed reaction is Endonucleolytic cleavage at a junction such as a reciprocal single-stranded crossover between two homologous DNA duplexes (Holliday junction).. Functionally, the RuvA-RuvB-RuvC complex processes Holliday junction (HJ) DNA during genetic recombination and DNA repair. Endonuclease that resolves HJ intermediates. Cleaves cruciform DNA by making single-stranded nicks across the HJ at symmetrical positions within the homologous arms, yielding a 5'-phosphate and a 3'-hydroxyl group; requires a central core of homology in the junction. The consensus cleavage sequence is 5'-(A/T)TT(C/G)-3'. Cleavage occurs on the 3'-side of the TT dinucleotide at the point of strand exchange. HJ branch migration catalyzed by RuvA-RuvB allows RuvC to scan DNA until it finds its consensus sequence, where it cleaves and resolves the cruciform DNA. The polypeptide is Crossover junction endodeoxyribonuclease RuvC (Wolbachia pipientis subsp. Culex pipiens (strain wPip)).